The following is a 163-amino-acid chain: Meiotically up-regulated gene 109 protein (163 aa).

4 helical membrane passes run 61–78 (YRFY…FFIW), 82–104 (ALLA…SLTI), 114–134 (YSIP…APVG), and 136–156 (LFWS…LTTY).

It is found in the membrane. Functionally, has a role in meiosis. The chain is Meiotically up-regulated gene 109 protein (mug109) from Schizosaccharomyces pombe (strain 972 / ATCC 24843) (Fission yeast).